A 1520-amino-acid chain; its full sequence is DNA-directed RNA polymerase subunit beta'' (1520 aa).

The Zn(2+) site is built by Cys220, Cys296, Cys303, and Cys306. Basic and acidic residues-rich tracts occupy residues 645–654 (TREEEYRTRE) and 664–674 (PENKYRTREGE). Disordered regions lie at residues 645–676 (TREEEYRTREEDSEDEYESPENKYRTREGEGE) and 705–786 (YRTL…KKEG). Acidic residues-rich tracts occupy residues 730–748 (GEYEILEEDSEEEYGSSED) and 756–779 (TLEEDSEEDSEEDSEDEYGSPEED).

This sequence belongs to the RNA polymerase beta' chain family. RpoC2 subfamily. In terms of assembly, in plastids the minimal PEP RNA polymerase catalytic core is composed of four subunits: alpha, beta, beta', and beta''. When a (nuclear-encoded) sigma factor is associated with the core the holoenzyme is formed, which can initiate transcription. Zn(2+) is required as a cofactor.

It is found in the plastid. The protein resides in the chloroplast. It catalyses the reaction RNA(n) + a ribonucleoside 5'-triphosphate = RNA(n+1) + diphosphate. In terms of biological role, DNA-dependent RNA polymerase catalyzes the transcription of DNA into RNA using the four ribonucleoside triphosphates as substrates. This is DNA-directed RNA polymerase subunit beta'' from Sorghum bicolor (Sorghum).